Consider the following 634-residue polypeptide: Probable potassium transport system protein Kup (634 aa).

Helical transmembrane passes span 21–41, 61–81, 110–130, 148–168, 180–200, 217–237, 258–278, 296–316, 348–368, 377–397, 408–428, and 432–452; these read IILS…LYTL, ILSL…VAVI, IYIV…DGVI, PHMK…LFLC, FGPI…YNIA, FFLE…LAVT, WMYV…ALVL, GLYP…QALI, IYVP…VIGF, AYGV…IIYA, LWMM…ANII, and DGAW…RTWL.

This sequence belongs to the HAK/KUP transporter (TC 2.A.72) family.

The protein localises to the cell inner membrane. It carries out the reaction K(+)(in) + H(+)(in) = K(+)(out) + H(+)(out). In terms of biological role, transport of potassium into the cell. Likely operates as a K(+):H(+) symporter. In Xylella fastidiosa (strain 9a5c), this protein is Probable potassium transport system protein Kup.